A 192-amino-acid polypeptide reads, in one-letter code: ADP-ribosylation factor-like protein 14 (192 aa).

G2 carries N-myristoyl glycine lipidation. GTP contacts are provided by residues 20–27 (GLDSAGKS), 64–68 (DVGGQ), and 124–127 (NKQD).

Belongs to the small GTPase superfamily. Arf family. Interacts with ARL14EP.

Its subcellular location is the cytoplasmic vesicle. Its function is as follows. GTPase that recruits MYO1E to MHC class II-containing vesicles via the effector protein ARL14EP and hence controls the movement of these vesicles along the actin cytoskeleton in dendritic cells. The polypeptide is ADP-ribosylation factor-like protein 14 (Arl14) (Mus musculus (Mouse)).